The sequence spans 116 residues: UPF0127 protein PF1050 (116 aa).

This sequence belongs to the UPF0127 family.

The protein is UPF0127 protein PF1050 of Pyrococcus furiosus (strain ATCC 43587 / DSM 3638 / JCM 8422 / Vc1).